Consider the following 85-residue polypeptide: Fungal defensin triintsin (85 aa).

Residues 1–21 form the signal peptide; sequence MQFTKLATVLIVSLMGSAAIA. A propeptide spanning residues 22–47 is cleaved from the precursor; sequence APSVDNAPAVAAEEVAAAPAENLEKR. 3 disulfide bridges follow: cysteine 51/cysteine 72, cysteine 58/cysteine 80, and cysteine 62/cysteine 82.

It belongs to the invertebrate defensin family. Post-translationally, disulfide bonds are essential for antimicrobial activity.

The protein localises to the secreted. Antimicrobial peptide with broad-spectrum activity against Gram-positive bacteria, Gram-negative bacteria, and fungi. Also inhibits clinical isolates, including methicillin-resistant S.aureus (MRSA) (MIC=32 uM), K.pneumoniae, C.albicans and C.parapsilosis. Displays minimal inhibitory concentration (MIC) values similar to minimal bactericidal concentrations (MBC), suggesting a disruptive mechanism mode of action associated with membrane lysis. In vitro, shows hemolytic activity against human red blood cells. The chain is Fungal defensin triintsin from Trichophyton interdigitale (strain MR816).